We begin with the raw amino-acid sequence, 483 residues long: NADH-quinone oxidoreductase subunit N (483 aa).

The next 14 membrane-spanning stretches (helical) occupy residues 13–33, 39–57, 76–96, 110–130, 131–151, 165–185, 206–226, 240–260, 277–297, 302–322, 330–350, 373–393, 406–426, and 459–479; these read ALPEIFVLAMVSLILVIDAAV, YLAYGLSLVTLAGAAFLTV, PLSDVLKLFLYLTVAIVLVYS, FFVLALFALLGMMVMVSASHF, LTLYLGLELLSLSLYAMVALQ, FVLGALASGMLLYGMSMVYGV, IPLVFGIVFVVAGLAFKLGAV, PTAMTLFVGSAPKIAAFAFVV, MLVILAVLSMAIGNIAAIAQS, MFAYSTISHMGFMLLGVLAGS, MFYVLVYTLMTLGGFGMILLL, LAFVMLLLMFSMTGIPPTVGF, IGYVWLAVAAVLFSLVGAFYY, and LAVLALGILPQPLMAVCVQAI.

The protein belongs to the complex I subunit 2 family. NDH-1 is composed of 14 different subunits. Subunits NuoA, H, J, K, L, M, N constitute the membrane sector of the complex.

It localises to the cell inner membrane. The catalysed reaction is a quinone + NADH + 5 H(+)(in) = a quinol + NAD(+) + 4 H(+)(out). Functionally, NDH-1 shuttles electrons from NADH, via FMN and iron-sulfur (Fe-S) centers, to quinones in the respiratory chain. The immediate electron acceptor for the enzyme in this species is believed to be ubiquinone. Couples the redox reaction to proton translocation (for every two electrons transferred, four hydrogen ions are translocated across the cytoplasmic membrane), and thus conserves the redox energy in a proton gradient. The protein is NADH-quinone oxidoreductase subunit N of Thiobacillus denitrificans (strain ATCC 25259 / T1).